We begin with the raw amino-acid sequence, 26 residues long: Enolase-phosphatase E1 (26 aa).

It belongs to the HAD-like hydrolase superfamily. MasA/MtnC family. As to quaternary structure, monomer. Mg(2+) serves as cofactor.

It carries out the reaction 5-methylsulfanyl-2,3-dioxopentyl phosphate + H2O = 1,2-dihydroxy-5-(methylsulfanyl)pent-1-en-3-one + phosphate. The protein operates within amino-acid biosynthesis; L-methionine biosynthesis via salvage pathway; L-methionine from S-methyl-5-thio-alpha-D-ribose 1-phosphate: step 3/6. It functions in the pathway amino-acid biosynthesis; L-methionine biosynthesis via salvage pathway; L-methionine from S-methyl-5-thio-alpha-D-ribose 1-phosphate: step 4/6. In terms of biological role, bifunctional enzyme that catalyzes the enolization of 2,3-diketo-5-methylthiopentyl-1-phosphate (DK-MTP-1-P) into the intermediate 2-hydroxy-3-keto-5-methylthiopentenyl-1-phosphate (HK-MTPenyl-1-P), which is then dephosphorylated to form the acireductone 1,2-dihydroxy-3-keto-5-methylthiopentene (DHK-MTPene). The sequence is that of Enolase-phosphatase E1 (mtnC) from Klebsiella aerogenes (Enterobacter aerogenes).